Consider the following 376-residue polypeptide: Guanine nucleotide-binding protein G(s) subunit alpha (376 aa).

Gly-2 carries N-palmitoyl glycine lipidation. Residue Cys-3 is the site of S-palmitoyl cysteine attachment. The 341-residue stretch at 36-376 (GTHRLLLLGA…RMHLRQYELL (341 aa)) folds into the G-alpha domain. The G1 motif stretch occupies residues 39–52 (RLLLLGAGESGKST). GTP is bound by residues 44–51 (GAGESGKS), 180–186 (LRCRVLT), 205–209 (DVGGQ), 274–277 (NKQD), and Ala-348. 2 residues coordinate Mg(2+): Ser-51 and Thr-186. Residues 178–186 (DILRCRVLT) form a G2 motif region. A G3 motif region spans residues 201 to 210 (FHMFDVGGQR). The tract at residues 270–277 (ILFLNKQD) is G4 motif. Residues 346–351 (TCAVDT) are G5 motif.

This sequence belongs to the G-alpha family. G(s) subfamily. G proteins are composed of 3 units; alpha, beta and gamma. The alpha chain contains the guanine nucleotide binding site.

Functionally, guanine nucleotide-binding proteins (G proteins) are involved as modulators or transducers in various transmembrane signaling systems. The G(s) protein is involved in hormonal regulation of adenylate cyclase: it activates the cyclase in response to beta-adrenergic stimuli. The polypeptide is Guanine nucleotide-binding protein G(s) subunit alpha (Lymnaea stagnalis (Great pond snail)).